We begin with the raw amino-acid sequence, 1331 residues long: Alpha,alpha-trehalose-phosphate synthase [UDP-forming] 1 (1331 aa).

Polar residues predominate over residues 1–13 (MTDTATGVHSNAN). 3 disordered regions span residues 1–50 (MTDT…DNDP), 71–118 (TGKE…SGQL), and 1312–1331 (PMDQ…SFGN). Residues 39–50 (DPFDRPKNDNDP) show a composition bias toward basic and acidic residues. Positions 77 to 98 (LDESDDMTENEDHDEMANEDDG) are enriched in acidic residues. A compositionally biased stretch (basic and acidic residues) spans 102–112 (NEKKVETRKMD). The segment covering 1318–1331 (SSTLGASLGTSFGN) has biased composition (polar residues).

In the N-terminal section; belongs to the glycosyltransferase 20 family. The protein in the C-terminal section; belongs to the gob-1 trehalose phosphatase family.

The enzyme catalyses D-glucose 6-phosphate + UDP-alpha-D-glucose = alpha,alpha-trehalose 6-phosphate + UDP + H(+). Functionally, catalyzes the production of trehalose from glucose-6-phosphate and UDP-alpha-D-glucose in a 2 step process. This chain is Alpha,alpha-trehalose-phosphate synthase [UDP-forming] 1 (tps-1), found in Caenorhabditis elegans.